The primary structure comprises 638 residues: 1-deoxy-D-xylulose-5-phosphate synthase (638 aa).

Thiamine diphosphate is bound by residues His76 and 117–119 (AHS). Asp148 is a binding site for Mg(2+). Thiamine diphosphate is bound by residues 149 to 150 (GS), Asn177, Tyr287, and Glu369. Residue Asn177 coordinates Mg(2+).

The protein belongs to the transketolase family. DXPS subfamily. As to quaternary structure, homodimer. Mg(2+) serves as cofactor. Thiamine diphosphate is required as a cofactor.

The enzyme catalyses D-glyceraldehyde 3-phosphate + pyruvate + H(+) = 1-deoxy-D-xylulose 5-phosphate + CO2. Its pathway is metabolic intermediate biosynthesis; 1-deoxy-D-xylulose 5-phosphate biosynthesis; 1-deoxy-D-xylulose 5-phosphate from D-glyceraldehyde 3-phosphate and pyruvate: step 1/1. Its function is as follows. Catalyzes the acyloin condensation reaction between C atoms 2 and 3 of pyruvate and glyceraldehyde 3-phosphate to yield 1-deoxy-D-xylulose-5-phosphate (DXP). The polypeptide is 1-deoxy-D-xylulose-5-phosphate synthase (Rhodopseudomonas palustris (strain HaA2)).